We begin with the raw amino-acid sequence, 256 residues long: Thiazole synthase (256 aa).

The Schiff-base intermediate with DXP role is filled by lysine 95. Residues glycine 156, 182-183 (AG), and 204-205 (NT) each bind 1-deoxy-D-xylulose 5-phosphate.

Belongs to the ThiG family. In terms of assembly, homotetramer. Forms heterodimers with either ThiH or ThiS.

It localises to the cytoplasm. The enzyme catalyses [ThiS sulfur-carrier protein]-C-terminal-Gly-aminoethanethioate + 2-iminoacetate + 1-deoxy-D-xylulose 5-phosphate = [ThiS sulfur-carrier protein]-C-terminal Gly-Gly + 2-[(2R,5Z)-2-carboxy-4-methylthiazol-5(2H)-ylidene]ethyl phosphate + 2 H2O + H(+). It functions in the pathway cofactor biosynthesis; thiamine diphosphate biosynthesis. Functionally, catalyzes the rearrangement of 1-deoxy-D-xylulose 5-phosphate (DXP) to produce the thiazole phosphate moiety of thiamine. Sulfur is provided by the thiocarboxylate moiety of the carrier protein ThiS. In vitro, sulfur can be provided by H(2)S. In Salmonella paratyphi B (strain ATCC BAA-1250 / SPB7), this protein is Thiazole synthase.